Here is a 476-residue protein sequence, read N- to C-terminus: Thymidine phosphorylase (476 aa).

A compositionally biased stretch (pro residues) spans 1–11 (MAAPGTPPPLA). The segment at 1-26 (MAAPGTPPPLAPETAGADSGGGSGEH) is disordered. 2 positions are modified to phosphothreonine: Thr6 and Thr475.

The protein belongs to the thymidine/pyrimidine-nucleoside phosphorylase family. As to quaternary structure, homodimer.

It catalyses the reaction thymidine + phosphate = 2-deoxy-alpha-D-ribose 1-phosphate + thymine. Its pathway is pyrimidine metabolism; dTMP biosynthesis via salvage pathway; dTMP from thymine: step 1/2. Its function is as follows. Catalyzes the reversible phosphorolysis of thymidine. The produced molecules are then utilized as carbon and energy sources or in the rescue of pyrimidine bases for nucleotide synthesis. This Rattus norvegicus (Rat) protein is Thymidine phosphorylase (Tymp).